The sequence spans 458 residues: UDP-N-acetylglucosamine 1-carboxyvinyltransferase (458 aa).

34-35 contributes to the phosphoenolpyruvate binding site; sequence KN. A UDP-N-acetyl-alpha-D-glucosamine-binding site is contributed by Arg-104. Cys-128 (proton donor) is an active-site residue. Position 128 is a 2-(S-cysteinyl)pyruvic acid O-phosphothioketal (Cys-128). UDP-N-acetyl-alpha-D-glucosamine-binding residues include Asp-320 and Val-342.

The protein belongs to the EPSP synthase family. MurA subfamily.

It is found in the cytoplasm. It carries out the reaction phosphoenolpyruvate + UDP-N-acetyl-alpha-D-glucosamine = UDP-N-acetyl-3-O-(1-carboxyvinyl)-alpha-D-glucosamine + phosphate. It functions in the pathway cell wall biogenesis; peptidoglycan biosynthesis. In terms of biological role, cell wall formation. Adds enolpyruvyl to UDP-N-acetylglucosamine. The chain is UDP-N-acetylglucosamine 1-carboxyvinyltransferase from Prochlorococcus marinus (strain NATL2A).